The chain runs to 135 residues: T-cell receptor beta chain V region 3H.25 (135 aa).

The N-terminal stretch at 1–20 (MATRLLCYTVLCLLGARILN) is a signal peptide. Positions 21–115 (SKVIQTPRYL…SALYLCASSL (95 aa)) are v segment. Residues Cys-42 and Cys-111 are joined by a disulfide bond. Residues 116-118 (FGT) form a d segment region. Residues 119–135 (SDYTFGSGTRLLVIGKA) are j segment.

This Mus musculus (Mouse) protein is T-cell receptor beta chain V region 3H.25.